The sequence spans 312 residues: Type II methyltransferase M.NgoMIV (312 aa).

The region spanning 3–311 is the SAM-dependent MTase C5-type domain; that stretch reads FTSLEICAGA…RQIIKALKKE (309 aa). C74 is a catalytic residue.

Belongs to the class I-like SAM-binding methyltransferase superfamily. C5-methyltransferase family.

The catalysed reaction is a 2'-deoxycytidine in DNA + S-adenosyl-L-methionine = a 5-methyl-2'-deoxycytidine in DNA + S-adenosyl-L-homocysteine + H(+). Functionally, a methylase, recognizes the double-stranded sequence 5'-GCCGGC-3', methylates C-2 on both strands, and protects the DNA from cleavage by the NgoMIV endonuclease. This Neisseria gonorrhoeae protein is Type II methyltransferase M.NgoMIV (ngoMIVM).